The following is an 82-amino-acid chain: MMAKLMITVMMVLLLSLQQGADGRSERWRKNQMAASSIMRNLITARGDPPRFCRDELCSGDGDCSVWCTAGCNHDMGKCDTL.

The N-terminal stretch at methionine 1–glycine 23 is a signal peptide. Positions arginine 24–arginine 46 are excised as a propeptide. 4-hydroxyproline occurs at positions 49 and 50. Disulfide bonds link cysteine 53/cysteine 68, cysteine 58/cysteine 72, and cysteine 64/cysteine 79. Position 56 is a 4-carboxyglutamate (glutamate 56).

The protein belongs to the Pg turripeptide superfamily. As to expression, expressed by the venom duct.

It localises to the secreted. The polypeptide is Turripeptide Gsp9.2 (Gemmula speciosa (Splendid gem-turris)).